Reading from the N-terminus, the 309-residue chain is Sulfate adenylyltransferase subunit 2 (309 aa).

It belongs to the PAPS reductase family. CysD subfamily. As to quaternary structure, heterodimer composed of CysD, the smaller subunit, and CysN.

It catalyses the reaction sulfate + ATP + H(+) = adenosine 5'-phosphosulfate + diphosphate. It participates in sulfur metabolism; hydrogen sulfide biosynthesis; sulfite from sulfate: step 1/3. With CysN forms the ATP sulfurylase (ATPS) that catalyzes the adenylation of sulfate producing adenosine 5'-phosphosulfate (APS) and diphosphate, the first enzymatic step in sulfur assimilation pathway. APS synthesis involves the formation of a high-energy phosphoric-sulfuric acid anhydride bond driven by GTP hydrolysis by CysN coupled to ATP hydrolysis by CysD. In Mycolicibacterium vanbaalenii (strain DSM 7251 / JCM 13017 / BCRC 16820 / KCTC 9966 / NRRL B-24157 / PYR-1) (Mycobacterium vanbaalenii), this protein is Sulfate adenylyltransferase subunit 2.